Consider the following 347-residue polypeptide: Haptoglobin (347 aa).

The N-terminal stretch at 1–18 (MSDLGAVVALLLWGQLFA) is a signal peptide. Residues 31-88 (DGCPKPPMIANGYVEHLVRYQCKNYYRLRTEGDGVYTLNNEKQWTNKAVGDKLPECEA) form the Sushi domain. 2 disulfide bridges follow: Cys-52–Cys-86 and Cys-90–Cys-207. The segment at 103-347 (ILGGHLDAKG…DWVQKTIAEN (245 aa)) is serine protease. N-linked (GlcNAc...) asparagine glycans are attached at residues Asn-125, Asn-148, Asn-152, Asn-182, and Asn-232. Disulfide bonds link Cys-250/Cys-281 and Cys-292/Cys-322. Positions 259–264 (VPEKKT) are interaction with CD163.

This sequence belongs to the peptidase S1 family. Tetramer of two alpha and two beta chains; disulfide-linked. The hemoglobin/haptoglobin complex is composed of a haptoglobin dimer bound to two hemoglobin alpha-beta dimers. Interacts with CD163. Interacts with ERGIC3. Expressed by the liver and secreted in plasma.

Its subcellular location is the secreted. In terms of biological role, as a result of hemolysis, hemoglobin is found to accumulate in the kidney and is secreted in the urine. Haptoglobin captures, and combines with free plasma hemoglobin to allow hepatic recycling of heme iron and to prevent kidney damage. Haptoglobin also acts as an antioxidant, has antibacterial activity and plays a role in modulating many aspects of the acute phase response. Hemoglobin/haptoglobin complexes are rapidly cleared by the macrophage CD163 scavenger receptor expressed on the surface of liver Kupfer cells through an endocytic lysosomal degradation pathway. The polypeptide is Haptoglobin (HP) (Papio hamadryas (Hamadryas baboon)).